Reading from the N-terminus, the 469-residue chain is Phosphoenolpyruvate carboxylase (469 aa).

This sequence belongs to the PEPCase type 2 family. As to quaternary structure, homotetramer. Mg(2+) serves as cofactor.

The catalysed reaction is oxaloacetate + phosphate = phosphoenolpyruvate + hydrogencarbonate. Catalyzes the irreversible beta-carboxylation of phosphoenolpyruvate (PEP) to form oxaloacetate (OAA), a four-carbon dicarboxylic acid source for the tricarboxylic acid cycle. In Pyrococcus abyssi (strain GE5 / Orsay), this protein is Phosphoenolpyruvate carboxylase.